Reading from the N-terminus, the 438-residue chain is Histidinol dehydrogenase (438 aa).

NAD(+)-binding residues include tyrosine 137, glutamine 198, and asparagine 221. Residues serine 244, glutamine 266, and histidine 269 each coordinate substrate. Zn(2+) contacts are provided by glutamine 266 and histidine 269. Active-site proton acceptor residues include glutamate 334 and histidine 335. Histidine 335, aspartate 368, glutamate 422, and histidine 427 together coordinate substrate. Aspartate 368 is a binding site for Zn(2+). Histidine 427 is a Zn(2+) binding site.

It belongs to the histidinol dehydrogenase family. The cofactor is Zn(2+).

It catalyses the reaction L-histidinol + 2 NAD(+) + H2O = L-histidine + 2 NADH + 3 H(+). It participates in amino-acid biosynthesis; L-histidine biosynthesis; L-histidine from 5-phospho-alpha-D-ribose 1-diphosphate: step 9/9. Catalyzes the sequential NAD-dependent oxidations of L-histidinol to L-histidinaldehyde and then to L-histidine. The protein is Histidinol dehydrogenase of Aromatoleum aromaticum (strain DSM 19018 / LMG 30748 / EbN1) (Azoarcus sp. (strain EbN1)).